The primary structure comprises 209 residues: LexA repressor (209 aa).

A DNA-binding region (H-T-H motif) is located at residues 28–48 (RVELAKILGFRSANAAEEHLK). Catalysis depends on for autocatalytic cleavage activity residues serine 126 and lysine 163.

Belongs to the peptidase S24 family. Homodimer.

It catalyses the reaction Hydrolysis of Ala-|-Gly bond in repressor LexA.. Functionally, represses a number of genes involved in the response to DNA damage (SOS response), including recA and lexA. In the presence of single-stranded DNA, RecA interacts with LexA causing an autocatalytic cleavage which disrupts the DNA-binding part of LexA, leading to derepression of the SOS regulon and eventually DNA repair. In Psychromonas ingrahamii (strain DSM 17664 / CCUG 51855 / 37), this protein is LexA repressor.